The chain runs to 329 residues: Sulfate-binding protein (329 aa).

The first 19 residues, M1–A19, serve as a signal peptide directing secretion.

This sequence belongs to the prokaryotic sulfate-binding protein family.

It localises to the periplasm. In terms of biological role, this protein specifically binds sulfate and is involved in its transmembrane transport. This Salmonella typhimurium (strain LT2 / SGSC1412 / ATCC 700720) protein is Sulfate-binding protein (sbp).